The primary structure comprises 63 residues: MAHPKRRISRSRRDKRRAQYNAKTKAPAVATCPVTGQSHHSHRAYWFEGSLYFKGRVVMTKEK.

Positions 1-18 (MAHPKRRISRSRRDKRRA) are enriched in basic residues. Residues 1 to 27 (MAHPKRRISRSRRDKRRAQYNAKTKAP) form a disordered region.

This sequence belongs to the bacterial ribosomal protein bL32 family.

The protein is Large ribosomal subunit protein bL32 of Chloroherpeton thalassium (strain ATCC 35110 / GB-78).